The chain runs to 366 residues: uncharacterized protein (366 aa).

Helical transmembrane passes span 164–184 (IPLI…FADI), 188–208 (IVVG…RKLL), 223–243 (VFPI…IYSL), 256–276 (FIGE…LILM), 299–319 (FFCL…GEYL), and 325–345 (FIMF…LSVI).

The protein to A.fulgidus AF2058.

Its subcellular location is the cell membrane. This is an uncharacterized protein from Methanocaldococcus jannaschii (strain ATCC 43067 / DSM 2661 / JAL-1 / JCM 10045 / NBRC 100440) (Methanococcus jannaschii).